The sequence spans 321 residues: Transmembrane and ubiquitin-like domain-containing protein 2 (321 aa).

A helical transmembrane segment spans residues 36 to 56 (VMVVAGVVVLILALVLAWLST). 2 disordered regions span residues 87–131 (LVAG…GGVE) and 145–170 (KRQA…LPPS). A compositionally biased stretch (basic and acidic residues) spans 104–120 (EGNDEKAEEAGEGRGDS). A Ubiquitin-like domain is found at 174–247 (ITVRLKFLND…IHCHRSPPGS (74 aa)). 2 helical membrane passes run 266–286 (LGVN…GVVW) and 295–315 (FFTA…SFLV).

Its subcellular location is the membrane. The protein is Transmembrane and ubiquitin-like domain-containing protein 2 (TMUB2) of Homo sapiens (Human).